A 607-amino-acid polypeptide reads, in one-letter code: Elongation factor 4 (607 aa).

Residues 11–193 enclose the tr-type G domain; that stretch reads ENIRNFSIIA…KIVEVVPPPE (183 aa). Residues 23-28 and 140-143 contribute to the GTP site; these read DHGKST and NKID.

It belongs to the TRAFAC class translation factor GTPase superfamily. Classic translation factor GTPase family. LepA subfamily.

The protein localises to the cell membrane. It carries out the reaction GTP + H2O = GDP + phosphate + H(+). In terms of biological role, required for accurate and efficient protein synthesis under certain stress conditions. May act as a fidelity factor of the translation reaction, by catalyzing a one-codon backward translocation of tRNAs on improperly translocated ribosomes. Back-translocation proceeds from a post-translocation (POST) complex to a pre-translocation (PRE) complex, thus giving elongation factor G a second chance to translocate the tRNAs correctly. Binds to ribosomes in a GTP-dependent manner. This is Elongation factor 4 from Staphylococcus haemolyticus (strain JCSC1435).